The primary structure comprises 327 residues: Probable cell division protein WhiA (327 aa).

A DNA-binding region (H-T-H motif) is located at residues 275–308 (SLEELGRLADPPMTKDAVAGRIRRLLSMADRKAK).

This sequence belongs to the WhiA family.

Involved in cell division and chromosome segregation. The chain is Probable cell division protein WhiA from Mycobacterium avium (strain 104).